Consider the following 338-residue polypeptide: GTPase Obg (338 aa).

An Obg domain is found at 1–159 (MSFIDEVKIN…RWIRMELKLM (159 aa)). Residues 58–79 (DLRQHPHQKAGRGKNGMGSDRH) form a disordered region. An OBG-type G domain is found at 160–331 (ADVGLLGMPS…LLDDIAFNLW (172 aa)). GTP-binding positions include 166 to 173 (GMPSVGKS), 191 to 195 (FTTLK), 213 to 216 (DIPG), 283 to 286 (NKID), and 312 to 314 (SAA). Mg(2+)-binding residues include S173 and T193.

Belongs to the TRAFAC class OBG-HflX-like GTPase superfamily. OBG GTPase family. As to quaternary structure, monomer. Mg(2+) serves as cofactor.

The protein resides in the cytoplasm. Its function is as follows. An essential GTPase which binds GTP, GDP and possibly (p)ppGpp with moderate affinity, with high nucleotide exchange rates and a fairly low GTP hydrolysis rate. Plays a role in control of the cell cycle, stress response, ribosome biogenesis and in those bacteria that undergo differentiation, in morphogenesis control. In Citrifermentans bemidjiense (strain ATCC BAA-1014 / DSM 16622 / JCM 12645 / Bem) (Geobacter bemidjiensis), this protein is GTPase Obg.